The sequence spans 441 residues: Interferon-related developmental regulator 2 (441 aa).

Positions 1-15 are enriched in basic residues; sequence MPRARKGNALRKGGQ. The tract at residues 1-51 is disordered; that stretch reads MPRARKGNALRKGGQRRGGGARSSTQADSGSSEDEAASEARSTTSDCPSLL.

Belongs to the IFRD family. As to quaternary structure, associates with ribosomes; promoting ribosome inactivation.

Its function is as follows. Ribosome-binding protein that acts as an inhibitor of mRNA translation by promoting ribosome inactivation. Associates with the P- and E-sites of the ribosome and inserts a C-terminal helix into the mRNA exit channel to preclude translation. This is Interferon-related developmental regulator 2 from Mus musculus (Mouse).